Consider the following 63-residue polypeptide: Small ribosomal subunit protein eS17 (63 aa).

This sequence belongs to the eukaryotic ribosomal protein eS17 family.

This is Small ribosomal subunit protein eS17 from Methanococcus aeolicus (strain ATCC BAA-1280 / DSM 17508 / OCM 812 / Nankai-3).